The following is a 93-amino-acid chain: Small ribosomal subunit protein uS19 (93 aa).

Belongs to the universal ribosomal protein uS19 family.

Its function is as follows. Protein S19 forms a complex with S13 that binds strongly to the 16S ribosomal RNA. In Parafrankia sp. (strain EAN1pec), this protein is Small ribosomal subunit protein uS19.